The chain runs to 466 residues: Glutamate--tRNA ligase (466 aa).

The 'HIGH' region motif lies at 10–20 (PSPTGALHIGG). Zn(2+)-binding residues include cysteine 99, cysteine 101, cysteine 126, and aspartate 128. The short motif at 239 to 243 (KLSKR) is the 'KMSKS' region element. Residue lysine 242 coordinates ATP.

Belongs to the class-I aminoacyl-tRNA synthetase family. Glutamate--tRNA ligase type 1 subfamily. Monomer. Zn(2+) is required as a cofactor.

The protein localises to the cytoplasm. The enzyme catalyses tRNA(Glu) + L-glutamate + ATP = L-glutamyl-tRNA(Glu) + AMP + diphosphate. In terms of biological role, catalyzes the attachment of glutamate to tRNA(Glu) in a two-step reaction: glutamate is first activated by ATP to form Glu-AMP and then transferred to the acceptor end of tRNA(Glu). This is Glutamate--tRNA ligase from Pelagibacter ubique (strain HTCC1062).